The chain runs to 103 residues: Large ribosomal subunit protein bL21 (103 aa).

Belongs to the bacterial ribosomal protein bL21 family. Part of the 50S ribosomal subunit. Contacts protein L20.

In terms of biological role, this protein binds to 23S rRNA in the presence of protein L20. The protein is Large ribosomal subunit protein bL21 of Paraburkholderia phymatum (strain DSM 17167 / CIP 108236 / LMG 21445 / STM815) (Burkholderia phymatum).